The chain runs to 124 residues: MMKINNLPRLIRAFLPATLLMLPLVWQTPALAQSASCTQGSTCVSVGGNNDPMSKEQARQSQQQWDETNRLRNKMNNRVEKDFDKNDRAVDAKDNCERSDNLNAYWEPNTQRCLDRLSGRKINP.

Positions 1–32 are cleaved as a signal peptide; the sequence is MMKINNLPRLIRAFLPATLLMLPLVWQTPALA. Positions 47–69 are disordered; it reads GGNNDPMSKEQARQSQQQWDETN.

Belongs to the UPF0482 family.

This chain is UPF0482 protein YPK_1977, found in Yersinia pseudotuberculosis serotype O:3 (strain YPIII).